Reading from the N-terminus, the 57-residue chain is Potassium channel toxin MeuTXKalpha2 (57 aa).

A signal peptide spans 1–19; sequence MSRLYAIILIALVFNVIMT. The propeptide occupies 20 to 28; sequence IMPDMKVEA. 3 cysteine pairs are disulfide-bonded: Cys-31/Cys-47, Cys-34/Cys-52, and Cys-38/Cys-54.

Belongs to the short scorpion toxin superfamily. Potassium channel inhibitor family. Alpha-KTx 08 subfamily. Expressed by the venom gland.

It is found in the secreted. Its function is as follows. Inhibits Kv1.1/KCNA1, Kv1.3/KCNA3 and Shaker potassium channels. The chain is Potassium channel toxin MeuTXKalpha2 from Mesobuthus eupeus (Lesser Asian scorpion).